The primary structure comprises 336 residues: Protein-glutamate methylesterase/protein-glutamine glutaminase 2 (336 aa).

Positions 2-119 (KIAIVNDMPM…PNPKEAAAPL (118 aa)) constitute a Response regulatory domain. Position 53 is a 4-aspartylphosphate (Asp53). The CheB-type methylesterase domain occupies 147 to 336 (PSRRDRLVAI…APRLIEVFTQ (190 aa)). Active-site residues include Ser159, His186, and Asp279.

This sequence belongs to the CheB family. Post-translationally, phosphorylated by CheA. Phosphorylation of the N-terminal regulatory domain activates the methylesterase activity.

The protein localises to the cytoplasm. The catalysed reaction is [protein]-L-glutamate 5-O-methyl ester + H2O = L-glutamyl-[protein] + methanol + H(+). The enzyme catalyses L-glutaminyl-[protein] + H2O = L-glutamyl-[protein] + NH4(+). In terms of biological role, involved in chemotaxis. Part of a chemotaxis signal transduction system that modulates chemotaxis in response to various stimuli. Catalyzes the demethylation of specific methylglutamate residues introduced into the chemoreceptors (methyl-accepting chemotaxis proteins or MCP) by CheR. Also mediates the irreversible deamidation of specific glutamine residues to glutamic acid. The chain is Protein-glutamate methylesterase/protein-glutamine glutaminase 2 from Pseudomonas syringae pv. syringae (strain B728a).